Reading from the N-terminus, the 197-residue chain is Xanthine phosphoribosyltransferase (197 aa).

Xanthine contacts are provided by Leu-20 and Asn-27. Residue 128–132 (ANGQA) coordinates 5-phospho-alpha-D-ribose 1-diphosphate. A xanthine-binding site is contributed by Lys-156.

It belongs to the purine/pyrimidine phosphoribosyltransferase family. Xpt subfamily. As to quaternary structure, homodimer.

The protein localises to the cytoplasm. The enzyme catalyses XMP + diphosphate = xanthine + 5-phospho-alpha-D-ribose 1-diphosphate. It participates in purine metabolism; XMP biosynthesis via salvage pathway; XMP from xanthine: step 1/1. Its function is as follows. Converts the preformed base xanthine, a product of nucleic acid breakdown, to xanthosine 5'-monophosphate (XMP), so it can be reused for RNA or DNA synthesis. The protein is Xanthine phosphoribosyltransferase of Bacillus thuringiensis (strain Al Hakam).